A 296-amino-acid chain; its full sequence is MIIHPNFDPVAIHLGPLAVRWYGLMYLVGFILAIVVGRLRLKLPHVAAQGWSAKDIDDMMFYGVLGVVLGGRLGYVLFYKAGYYFSHPLDIFRVWEGGMSFHGGFLGVTLAMALFAWQRKRHWLEVTDFVAPMVPTGLAAGRLGNFINGELWGRVTSPDAPWAMLFPGASRDDAAWLAAHQDIAAKWNLNEVFLSHQMLPRHPSQLYEIALEGIALFFVLWFFSRKPRPMGAISALFLIGYGAARFTVEFAREPDDFLGLLTFGLSMGQWLSLPMIVAGVLMMIWAYRRGGVAKQA.

Helical transmembrane passes span 17–37 (LAVR…IVVG), 59–79 (MMFY…VLFY), and 97–117 (GGMS…LFAW). A 1,2-diacyl-sn-glycero-3-phospho-(1'-sn-glycerol) is bound at residue arginine 142. A run of 2 helical transmembrane segments spans residues 230–250 (MGAI…TVEF) and 265–285 (LSMG…MMIW).

The protein belongs to the Lgt family.

The protein localises to the cell inner membrane. The catalysed reaction is L-cysteinyl-[prolipoprotein] + a 1,2-diacyl-sn-glycero-3-phospho-(1'-sn-glycerol) = an S-1,2-diacyl-sn-glyceryl-L-cysteinyl-[prolipoprotein] + sn-glycerol 1-phosphate + H(+). It functions in the pathway protein modification; lipoprotein biosynthesis (diacylglyceryl transfer). Catalyzes the transfer of the diacylglyceryl group from phosphatidylglycerol to the sulfhydryl group of the N-terminal cysteine of a prolipoprotein, the first step in the formation of mature lipoproteins. This Burkholderia mallei (strain NCTC 10247) protein is Phosphatidylglycerol--prolipoprotein diacylglyceryl transferase.